Consider the following 217-residue polypeptide: Ribonuclease T (217 aa).

An Exonuclease domain is found at 20-195 (VVVDVETAGL…YDTERTAMLF (176 aa)). Mg(2+) contacts are provided by D23, E25, H182, and D187. Residue H182 is the Proton donor/acceptor of the active site.

Belongs to the RNase T family. Homodimer. Requires Mg(2+) as cofactor.

Trims short 3' overhangs of a variety of RNA species, leaving a one or two nucleotide 3' overhang. Responsible for the end-turnover of tRNA: specifically removes the terminal AMP residue from uncharged tRNA (tRNA-C-C-A). Also appears to be involved in tRNA biosynthesis. The polypeptide is Ribonuclease T (Blochmanniella pennsylvanica (strain BPEN)).